The sequence spans 416 residues: Kynureninase (416 aa).

Residues Thr-97, Ser-98, 129-132, Thr-172, Asp-201, His-204, and Tyr-226 contribute to the pyridoxal 5'-phosphate site; that span reads FPTD. Lys-227 bears the N6-(pyridoxal phosphate)lysine mark. Pyridoxal 5'-phosphate is bound by residues Trp-256 and Thr-282.

The protein belongs to the kynureninase family. As to quaternary structure, homodimer. Pyridoxal 5'-phosphate is required as a cofactor.

It catalyses the reaction L-kynurenine + H2O = anthranilate + L-alanine + H(+). The catalysed reaction is 3-hydroxy-L-kynurenine + H2O = 3-hydroxyanthranilate + L-alanine + H(+). The protein operates within amino-acid degradation; L-kynurenine degradation; L-alanine and anthranilate from L-kynurenine: step 1/1. Its pathway is cofactor biosynthesis; NAD(+) biosynthesis; quinolinate from L-kynurenine: step 2/3. In terms of biological role, catalyzes the cleavage of L-kynurenine (L-Kyn) and L-3-hydroxykynurenine (L-3OHKyn) into anthranilic acid (AA) and 3-hydroxyanthranilic acid (3-OHAA), respectively. The chain is Kynureninase from Pseudomonas fluorescens.